The sequence spans 296 residues: Fructose-bisphosphate aldolase class 1 (296 aa).

The Proton acceptor role is filled by Glu-175. Catalysis depends on Lys-212, which acts as the Schiff-base intermediate with dihydroxyacetone-P.

Belongs to the class I fructose-bisphosphate aldolase family.

The catalysed reaction is beta-D-fructose 1,6-bisphosphate = D-glyceraldehyde 3-phosphate + dihydroxyacetone phosphate. It functions in the pathway carbohydrate degradation; glycolysis; D-glyceraldehyde 3-phosphate and glycerone phosphate from D-glucose: step 4/4. The protein is Fructose-bisphosphate aldolase class 1 of Staphylococcus aureus (strain Mu3 / ATCC 700698).